We begin with the raw amino-acid sequence, 338 residues long: TPR repeat-containing protein MJ0941 (338 aa).

8 TPR repeats span residues 27–62, 63–96, 97–130, 131–164, 165–198, 199–232, 268–301, and 302–335; these read LEAV…EPDF, YLAL…ESKN, PITW…ENRF, LSAF…TPNF, VPMW…KPHD, KNAL…LNVK, VALW…QPHY, and IKAL…IHKD.

This Methanocaldococcus jannaschii (strain ATCC 43067 / DSM 2661 / JAL-1 / JCM 10045 / NBRC 100440) (Methanococcus jannaschii) protein is TPR repeat-containing protein MJ0941.